The following is a 349-amino-acid chain: Protein RecA (349 aa).

64-71 contacts ATP; that stretch reads GPESSGKT.

It belongs to the RecA family.

Its subcellular location is the cytoplasm. Functionally, can catalyze the hydrolysis of ATP in the presence of single-stranded DNA, the ATP-dependent uptake of single-stranded DNA by duplex DNA, and the ATP-dependent hybridization of homologous single-stranded DNAs. It interacts with LexA causing its activation and leading to its autocatalytic cleavage. This is Protein RecA from Rhodopseudomonas palustris (strain ATCC BAA-98 / CGA009).